Here is a 315-residue protein sequence, read N- to C-terminus: Ribosomal RNA small subunit methyltransferase H (315 aa).

Residues 37-39 (GGH), aspartate 57, phenylalanine 83, aspartate 105, and glutamine 112 each bind S-adenosyl-L-methionine.

It belongs to the methyltransferase superfamily. RsmH family.

Its subcellular location is the cytoplasm. It catalyses the reaction cytidine(1402) in 16S rRNA + S-adenosyl-L-methionine = N(4)-methylcytidine(1402) in 16S rRNA + S-adenosyl-L-homocysteine + H(+). Specifically methylates the N4 position of cytidine in position 1402 (C1402) of 16S rRNA. The chain is Ribosomal RNA small subunit methyltransferase H from Pseudomonas fluorescens (strain Pf0-1).